Here is a 78-residue protein sequence, read N- to C-terminus: Large ribosomal subunit protein bL28 (78 aa).

Belongs to the bacterial ribosomal protein bL28 family.

The sequence is that of Large ribosomal subunit protein bL28 from Proteus mirabilis (strain HI4320).